The sequence spans 277 residues: Large ribosomal subunit protein uL2 (277 aa).

The disordered stretch occupies residues 219–277 (TVRGSVMNPNDHPHGGGEGRSPIGHPSPRTPWGKPALGYKTRKNKKYSDRFIVKRRHDK).

The protein belongs to the universal ribosomal protein uL2 family. As to quaternary structure, part of the 50S ribosomal subunit. Forms a bridge to the 30S subunit in the 70S ribosome.

In terms of biological role, one of the primary rRNA binding proteins. Required for association of the 30S and 50S subunits to form the 70S ribosome, for tRNA binding and peptide bond formation. It has been suggested to have peptidyltransferase activity; this is somewhat controversial. Makes several contacts with the 16S rRNA in the 70S ribosome. The chain is Large ribosomal subunit protein uL2 from Clostridium botulinum (strain Okra / Type B1).